A 71-amino-acid polypeptide reads, in one-letter code: uncharacterized protein (71 aa).

The first 19 residues, 1–19 (MFLFPSLLSSFCITLRSIS), serve as a signal peptide directing secretion.

This is an uncharacterized protein from Pasteurella multocida (strain Pm70).